Reading from the N-terminus, the 476-residue chain is UDP-glycosyltransferase 71C3 (476 aa).

Residues Ser-290, 349–351, 366–374, and 388–391 contribute to the UDP-alpha-D-glucose site; these read APQ, HCGWNSVLE, and YAEQ.

It belongs to the UDP-glycosyltransferase family.

Its function is as follows. Possesses low quercetin 3-O-glucosyltransferase activity in vitro. In Arabidopsis thaliana (Mouse-ear cress), this protein is UDP-glycosyltransferase 71C3 (UGT71C3).